A 167-amino-acid polypeptide reads, in one-letter code: NADH-ubiquinone oxidoreductase chain 6 (167 aa).

The next 5 helical transmembrane spans lie at 1–21 (MVLM…VASN), 23–43 (SPYF…GMLM), 47–67 (MTFL…VVFA), 86–106 (VFSY…AFVG), and 133–153 (AGGY…LVVL).

Belongs to the complex I subunit 6 family.

The protein localises to the mitochondrion membrane. It carries out the reaction a ubiquinone + NADH + 5 H(+)(in) = a ubiquinol + NAD(+) + 4 H(+)(out). Functionally, core subunit of the mitochondrial membrane respiratory chain NADH dehydrogenase (Complex I) that is believed to belong to the minimal assembly required for catalysis. Complex I functions in the transfer of electrons from NADH to the respiratory chain. The immediate electron acceptor for the enzyme is believed to be ubiquinone. The polypeptide is NADH-ubiquinone oxidoreductase chain 6 (MT-ND6) (Polypterus ornatipinnis (Ornate bichir)).